Consider the following 101-residue polypeptide: Nucleoid-associated protein Acid345_1974 (101 aa).

Belongs to the YbaB/EbfC family. As to quaternary structure, homodimer.

Its subcellular location is the cytoplasm. It localises to the nucleoid. In terms of biological role, binds to DNA and alters its conformation. May be involved in regulation of gene expression, nucleoid organization and DNA protection. This chain is Nucleoid-associated protein Acid345_1974, found in Koribacter versatilis (strain Ellin345).